Reading from the N-terminus, the 205-residue chain is Outer-membrane lipoprotein carrier protein (205 aa).

Residues 1–21 form the signal peptide; that stretch reads MRFLAVATMVVALMVPWSVRA.

It belongs to the LolA family. Monomer.

The protein localises to the periplasm. In terms of biological role, participates in the translocation of lipoproteins from the inner membrane to the outer membrane. Only forms a complex with a lipoprotein if the residue after the N-terminal Cys is not an aspartate (The Asp acts as a targeting signal to indicate that the lipoprotein should stay in the inner membrane). This Methylobacillus flagellatus (strain ATCC 51484 / DSM 6875 / VKM B-1610 / KT) protein is Outer-membrane lipoprotein carrier protein.